A 184-amino-acid polypeptide reads, in one-letter code: MAKYNEKELADTSKFLSFVLRHKPEAIGIVLDREGWADIDKLILCAQKAGKRLTRALLDTVVATSDKKRFSHSSDGRCIRAVQGHSTSQVAISFAEKTPPQFLYHGTASRFLDEIKKQGLIAGERHYVHLSADEATARKVGARHGSPVILTVKAQEMAKRGIPFWQAENGVWLTSTVAVEFLEW.

Belongs to the KptA/TPT1 family.

Removes the 2'-phosphate from RNA via an intermediate in which the phosphate is ADP-ribosylated by NAD followed by a presumed transesterification to release the RNA and generate ADP-ribose 1''-2''-cyclic phosphate (APPR&gt;P). May function as an ADP-ribosylase. This chain is Probable RNA 2'-phosphotransferase, found in Escherichia coli O8 (strain IAI1).